The chain runs to 193 residues: Phosphoheptose isomerase (193 aa).

Residues 37–193 enclose the SIS domain; sequence IAQSFKNEKK…LIIEKEMQKN (157 aa). 52 to 54 contributes to the substrate binding site; sequence NGG. His-61 and Glu-65 together coordinate Zn(2+). Residues Glu-65, 93 to 94, 119 to 121, Ser-124, and Gln-172 each bind substrate; these read ND and STS. Zn(2+)-binding residues include Gln-172 and His-180.

This sequence belongs to the SIS family. GmhA subfamily. Homotetramer. Zn(2+) serves as cofactor.

It is found in the cytoplasm. It catalyses the reaction 2 D-sedoheptulose 7-phosphate = D-glycero-alpha-D-manno-heptose 7-phosphate + D-glycero-beta-D-manno-heptose 7-phosphate. The protein operates within carbohydrate biosynthesis; D-glycero-D-manno-heptose 7-phosphate biosynthesis; D-glycero-alpha-D-manno-heptose 7-phosphate and D-glycero-beta-D-manno-heptose 7-phosphate from sedoheptulose 7-phosphate: step 1/1. Its function is as follows. Catalyzes the isomerization of sedoheptulose 7-phosphate in D-glycero-D-manno-heptose 7-phosphate. The sequence is that of Phosphoheptose isomerase from Buchnera aphidicola subsp. Acyrthosiphon pisum (strain 5A).